A 253-amino-acid polypeptide reads, in one-letter code: Hydroxyacylglutathione hydrolase (253 aa).

Zn(2+)-binding residues include H54, H56, D58, H59, H112, D131, and H169.

This sequence belongs to the metallo-beta-lactamase superfamily. Glyoxalase II family. As to quaternary structure, monomer. Zn(2+) serves as cofactor.

The catalysed reaction is an S-(2-hydroxyacyl)glutathione + H2O = a 2-hydroxy carboxylate + glutathione + H(+). It participates in secondary metabolite metabolism; methylglyoxal degradation; (R)-lactate from methylglyoxal: step 2/2. Its function is as follows. Thiolesterase that catalyzes the hydrolysis of S-D-lactoyl-glutathione to form glutathione and D-lactic acid. The polypeptide is Hydroxyacylglutathione hydrolase (Bartonella tribocorum (strain CIP 105476 / IBS 506)).